A 137-amino-acid polypeptide reads, in one-letter code: MIWKRHLTLDELNATSQNTLVAHLGIVYTHLGDDVLEAEMPVDARTHQPFGLLHGGASAALAETLGSMAGYLMTRDGQCVVGTELNATHHRAVSQGKVRGVCLPLHLGRQNQSWEITLFDEQGRRCCTCRLGTAVMG.

Glutamate 63 serves as the catalytic Nucleophile or proton acceptor.

It belongs to the thioesterase PaaI family. Homotetramer. Dimer of dimers. Interacts specifically with the aryl carrier protein (ArCP) domain of EntB.

It is found in the cytoplasm. The protein operates within siderophore biosynthesis; enterobactin biosynthesis. Required for optimal enterobactin synthesis. Acts as a proofreading enzyme that prevents EntB misacylation by hydrolyzing the thioester bound existing between EntB and wrongly charged molecules. In Salmonella paratyphi A (strain AKU_12601), this protein is Proofreading thioesterase EntH.